We begin with the raw amino-acid sequence, 353 residues long: Photosystem II protein D1 (353 aa).

Threonine 2 is modified (N-acetylthreonine). A Phosphothreonine modification is found at threonine 2. Helical transmembrane passes span 29–46 (YIGW…TATS), 118–133 (HFLL…EWEL), and 142–156 (WIAV…AATA). Residue histidine 118 coordinates chlorophyll a. Position 126 (tyrosine 126) interacts with pheophytin a. 2 residues coordinate [CaMn4O5] cluster: aspartate 170 and glutamate 189. Residues 197–218 (FHMLGVAGVFGGSLFSAMHGSL) traverse the membrane as a helical segment. Histidine 198 is a chlorophyll a binding site. A quinone is bound by residues histidine 215 and 264–265 (SF). Residue histidine 215 participates in Fe cation binding. A Fe cation-binding site is contributed by histidine 272. The helical transmembrane segment at 274-288 (FLAAWPVVGIWFTAL) threads the bilayer. Residues histidine 332, glutamate 333, aspartate 342, and alanine 344 each coordinate [CaMn4O5] cluster. The propeptide occupies 345–353 (SVELDSIDG).

The protein belongs to the reaction center PufL/M/PsbA/D family. In terms of assembly, PSII is composed of 1 copy each of membrane proteins PsbA, PsbB, PsbC, PsbD, PsbE, PsbF, PsbH, PsbI, PsbJ, PsbK, PsbL, PsbM, PsbT, PsbX, PsbY, PsbZ, Psb30/Ycf12, at least 3 peripheral proteins of the oxygen-evolving complex and a large number of cofactors. It forms dimeric complexes. The D1/D2 heterodimer binds P680, chlorophylls that are the primary electron donor of PSII, and subsequent electron acceptors. It shares a non-heme iron and each subunit binds pheophytin, quinone, additional chlorophylls, carotenoids and lipids. D1 provides most of the ligands for the Mn4-Ca-O5 cluster of the oxygen-evolving complex (OEC). There is also a Cl(-1) ion associated with D1 and D2, which is required for oxygen evolution. The PSII complex binds additional chlorophylls, carotenoids and specific lipids. serves as cofactor. Tyr-161 forms a radical intermediate that is referred to as redox-active TyrZ, YZ or Y-Z. Post-translationally, C-terminally processed by CTPA; processing is essential to allow assembly of the oxygen-evolving complex and thus photosynthetic growth.

Its subcellular location is the plastid. It localises to the chloroplast thylakoid membrane. The enzyme catalyses 2 a plastoquinone + 4 hnu + 2 H2O = 2 a plastoquinol + O2. Functionally, photosystem II (PSII) is a light-driven water:plastoquinone oxidoreductase that uses light energy to abstract electrons from H(2)O, generating O(2) and a proton gradient subsequently used for ATP formation. It consists of a core antenna complex that captures photons, and an electron transfer chain that converts photonic excitation into a charge separation. The D1/D2 (PsbA/PsbD) reaction center heterodimer binds P680, the primary electron donor of PSII as well as several subsequent electron acceptors. In Gnetum parvifolium (Small-leaved jointfir), this protein is Photosystem II protein D1.